The chain runs to 186 residues: Dehydrin Rab18 (186 aa).

The tract at residues 1–186 is disordered; the sequence is MASYQNRPGG…IKEKLPGGGR (186 aa). A compositionally biased stretch (gly residues) spans 30–85; sequence PMGGGGYGTGGGGGATGGQGYGTGGQGYGSGGQGYGTGGQGYGTGTGTEGFGTGGG. A compositionally biased stretch (basic and acidic residues) spans 89 to 98; the sequence is HGQEQLHKES. Low complexity predominate over residues 105-116; sequence MLHRSGSGSSSS. Residues 133 to 144 show a composition bias toward basic and acidic residues; the sequence is KIKEKLPGHHDQ. Over residues 152–164 the composition is skewed to gly residues; that stretch reads GGMGSGYDAGGYG. Residues 165 to 186 are compositionally biased toward basic and acidic residues; that stretch reads GEHHEKKGMMDKIKEKLPGGGR.

The protein belongs to the plant dehydrin family.

The sequence is that of Dehydrin Rab18 (RAB18) from Arabidopsis thaliana (Mouse-ear cress).